The following is a 239-amino-acid chain: Prolyl hydroxylase EGLN3 (239 aa).

The tract at residues 62–73 is beta(2)beta(3) 'finger-like' loop; the sequence is AGPRAGVSKRHL. Residues 88-104 form a required for interaction with ADRB2 region; the sequence is CEAINFLLSLIDRLVLY. The 99-residue stretch at 116 to 214 folds into the Fe2OG dioxygenase domain; the sequence is ERSKAMVACY…RYAMTVWYFD (99 aa). Fe cation-binding residues include His135, Asp137, and His196. Residue Arg205 participates in 2-oxoglutarate binding.

Interacts with ADRB2; the interaction hydroxylates ADRB2 facilitating its ubiquitination by the VHL-E3 ligase complex. Interacts with PAX2; the interaction targets PAX2 for destruction. Interacts with PKM; the interaction hydroxylates PKM in hypoxia. Interacts with WDR83; the interaction leads to almost complete elimination of HIF-mediated reporter activity. Interacts with BCL2 (via its BH4 domain); the interaction disrupts the BAX-BCL4 complex inhibiting the anti-apoptotic activity of BCL2. Fe(2+) serves as cofactor. Requires L-ascorbate as cofactor. In terms of processing, ubiquitinated by SIAH1 and/or SIAH2 in response to the unfolded protein response (UPR), leading to its degradation. In terms of tissue distribution, highly expressed in vascular smooth muscle. Moderately expressed in esophagus, stomach, small bowel and aorta. Low levels in tail and kidney. Expression also in pheochromocytoma cell line PC-12.

It is found in the nucleus. The protein resides in the cytoplasm. It carries out the reaction L-prolyl-[protein] + 2-oxoglutarate + O2 = trans-4-hydroxy-L-prolyl-[protein] + succinate + CO2. It catalyses the reaction L-prolyl-[hypoxia-inducible factor alpha subunit] + 2-oxoglutarate + O2 = trans-4-hydroxy-L-prolyl-[hypoxia-inducible factor alpha subunit] + succinate + CO2. Its function is as follows. Prolyl hydroxylase that mediates hydroxylation of proline residues in target proteins, such as PKM, TELO2, ATF4 and HIF1A. Target proteins are preferentially recognized via a LXXLAP motif. Cellular oxygen sensor that catalyzes, under normoxic conditions, the post-translational formation of 4-hydroxyproline in hypoxia-inducible factor (HIF) alpha proteins. Hydroxylates a specific proline found in each of the oxygen-dependent degradation (ODD) domains (N-terminal, NODD, and C-terminal, CODD) of HIF1A. Also hydroxylates HIF2A. Has a preference for the CODD site for both HIF1A and HIF2A. Hydroxylation on the NODD site by EGLN3 appears to require prior hydroxylation on the CODD site. Hydroxylated HIFs are then targeted for proteasomal degradation via the von Hippel-Lindau ubiquitination complex. Under hypoxic conditions, the hydroxylation reaction is attenuated allowing HIFs to escape degradation resulting in their translocation to the nucleus, heterodimerization with HIF1B, and increased expression of hypoxy-inducible genes. ELGN3 is the most important isozyme in limiting physiological activation of HIFs (particularly HIF2A) in hypoxia. Also hydroxylates PKM in hypoxia, limiting glycolysis. Under normoxia, hydroxylates and regulates the stability of ADRB2. Regulator of cardiomyocyte and neuronal apoptosis. In cardiomyocytes, inhibits the anti-apoptotic effect of BCL2 by disrupting the BAX-BCL2 complex. In neurons, has a NGF-induced proapoptotic effect, probably through regulating CASP3 activity. Also essential for hypoxic regulation of neutrophilic inflammation. Plays a crucial role in DNA damage response (DDR) by hydroxylating TELO2, promoting its interaction with ATR which is required for activation of the ATR/CHK1/p53 pathway. Also mediates hydroxylation of ATF4, leading to decreased protein stability of ATF4. The protein is Prolyl hydroxylase EGLN3 (Egln3) of Rattus norvegicus (Rat).